The chain runs to 140 residues: Nucleoside diphosphate kinase (140 aa).

Residues lysine 11, phenylalanine 59, arginine 87, threonine 93, arginine 104, and asparagine 114 each coordinate ATP. The active-site Pros-phosphohistidine intermediate is histidine 117.

The protein belongs to the NDK family. As to quaternary structure, homotetramer. Requires Mg(2+) as cofactor.

Its subcellular location is the cytoplasm. It catalyses the reaction a 2'-deoxyribonucleoside 5'-diphosphate + ATP = a 2'-deoxyribonucleoside 5'-triphosphate + ADP. The catalysed reaction is a ribonucleoside 5'-diphosphate + ATP = a ribonucleoside 5'-triphosphate + ADP. Major role in the synthesis of nucleoside triphosphates other than ATP. The ATP gamma phosphate is transferred to the NDP beta phosphate via a ping-pong mechanism, using a phosphorylated active-site intermediate. This is Nucleoside diphosphate kinase from Rhizobium meliloti (strain 1021) (Ensifer meliloti).